A 164-amino-acid polypeptide reads, in one-letter code: Ion-translocating oxidoreductase complex subunit G (164 aa).

Threonine 125 bears the FMN phosphoryl threonine mark.

It belongs to the RnfG family. As to quaternary structure, the complex is composed of six subunits: RnfA, RnfB, RnfC, RnfD, RnfE and RnfG. The cofactor is FMN.

In terms of biological role, part of a membrane-bound complex that couples electron transfer with translocation of ions across the membrane. The polypeptide is Ion-translocating oxidoreductase complex subunit G (Buchnera aphidicola subsp. Acyrthosiphon pisum (strain APS) (Acyrthosiphon pisum symbiotic bacterium)).